A 393-amino-acid polypeptide reads, in one-letter code: Phosphoglycerate kinase (393 aa).

Substrate contacts are provided by residues 21 to 23, Arg-36, 59 to 62, Arg-113, and Arg-146; these read DLN and HLGR. ATP-binding positions include Lys-197, Glu-319, and 345-348; that span reads GGDT.

This sequence belongs to the phosphoglycerate kinase family. Monomer.

The protein localises to the cytoplasm. The catalysed reaction is (2R)-3-phosphoglycerate + ATP = (2R)-3-phospho-glyceroyl phosphate + ADP. It participates in carbohydrate degradation; glycolysis; pyruvate from D-glyceraldehyde 3-phosphate: step 2/5. In Nitratidesulfovibrio vulgaris (strain ATCC 29579 / DSM 644 / CCUG 34227 / NCIMB 8303 / VKM B-1760 / Hildenborough) (Desulfovibrio vulgaris), this protein is Phosphoglycerate kinase.